Consider the following 179-residue polypeptide: Large ribosomal subunit protein uL5 (179 aa).

It belongs to the universal ribosomal protein uL5 family. Part of the 50S ribosomal subunit; part of the 5S rRNA/L5/L18/L25 subcomplex. Contacts the 5S rRNA and the P site tRNA. Forms a bridge to the 30S subunit in the 70S ribosome.

In terms of biological role, this is one of the proteins that bind and probably mediate the attachment of the 5S RNA into the large ribosomal subunit, where it forms part of the central protuberance. In the 70S ribosome it contacts protein S13 of the 30S subunit (bridge B1b), connecting the 2 subunits; this bridge is implicated in subunit movement. Contacts the P site tRNA; the 5S rRNA and some of its associated proteins might help stabilize positioning of ribosome-bound tRNAs. This chain is Large ribosomal subunit protein uL5, found in Shewanella woodyi (strain ATCC 51908 / MS32).